We begin with the raw amino-acid sequence, 159 residues long: MHLSNLLKVNYRFEGPHQVDVIDGGTLAQLLIPLITSYDYVIVIDCVDAGGGKIGEVYFFDFDNVPNVITWQGSAHEVEMLQTLRMTEVNGDLPPVKIVGVIPSIIGSETAFDLSKEVAEASVTMEKIVLNHLQELGVEITRIDSKTIDEIAPLSYKGF.

Belongs to the peptidase A31 family.

This is Protein HydD (hydD) from Wolinella succinogenes (strain ATCC 29543 / DSM 1740 / CCUG 13145 / JCM 31913 / LMG 7466 / NCTC 11488 / FDC 602W) (Vibrio succinogenes).